The following is a 437-amino-acid chain: Palmitoyltransferase PFA4 (437 aa).

Residues 1-12 lie on the Cytoplasmic side of the membrane; sequence MAGLNDVPFIKG. Residues 13-33 traverse the membrane as a helical segment; it reads LAVPSVCALIIFLGYASQFLF. Over 34 to 48 the chain is Lumenal; the sequence is NYSTTLEPGPPTRRE. The chain crosses the membrane as a helical span at residues 49 to 69; that stretch reads TIIFNGLLLVLWITYYRTVAT. The Cytoplasmic segment spans residues 70–130; it reads DPGRYIFKDR…RNCVSMTTFP (61 aa). The DHHC domain occupies 87 to 137; sequence RWCNKCAAPKPPRAHHCRHCARCVPRMDHHCPWTRNCVSMTTFPHFLRFLI. The active-site S-palmitoyl cysteine intermediate is the Cys117. The helical transmembrane segment at 131–151 threads the bilayer; that stretch reads HFLRFLIYTNMSLWMLGYFLW. Over 152–173 the chain is Lumenal; it reads QRFSKIWEHRRLPAYLGPSFYG. A helical transmembrane segment spans residues 174–194; the sequence is LICLSLISIVNFVTTVALGIM. Residues 195 to 437 are Cytoplasmic-facing; the sequence is LINTVKSWVF…KILKKDGLDD (243 aa). A disordered region spans residues 377 to 419; that stretch reads LDQGLGWVNSDGDRLRDYGVDEEASEPEGVNDDDDDDDDDDVP. A compositionally biased stretch (acidic residues) spans 396–419; it reads VDEEASEPEGVNDDDDDDDDDDVP.

It belongs to the DHHC palmitoyltransferase family. PFA4 subfamily.

It is found in the endoplasmic reticulum membrane. The enzyme catalyses L-cysteinyl-[protein] + hexadecanoyl-CoA = S-hexadecanoyl-L-cysteinyl-[protein] + CoA. Its function is as follows. Mediates the reversible addition of palmitate to target proteins, thereby regulating their membrane association and biological function. This is Palmitoyltransferase PFA4 from Gibberella zeae (strain ATCC MYA-4620 / CBS 123657 / FGSC 9075 / NRRL 31084 / PH-1) (Wheat head blight fungus).